The primary structure comprises 591 residues: NADH-quinone oxidoreductase subunit C/D (591 aa).

The segment at 1-182 is NADH dehydrogenase I subunit C; that stretch reads MVTVVENIDP…TPYFLNTAKQ (182 aa). The segment at 206 to 591 is NADH dehydrogenase I subunit D; it reads DFMFLNIGPN…IDVVMADCDR (386 aa).

The protein in the N-terminal section; belongs to the complex I 30 kDa subunit family. In the C-terminal section; belongs to the complex I 49 kDa subunit family. NDH-1 is composed of 13 different subunits. Subunits NuoB, CD, E, F, and G constitute the peripheral sector of the complex.

Its subcellular location is the cell inner membrane. The enzyme catalyses a quinone + NADH + 5 H(+)(in) = a quinol + NAD(+) + 4 H(+)(out). Functionally, NDH-1 shuttles electrons from NADH, via FMN and iron-sulfur (Fe-S) centers, to quinones in the respiratory chain. The immediate electron acceptor for the enzyme in this species is believed to be ubiquinone. Couples the redox reaction to proton translocation (for every two electrons transferred, four hydrogen ions are translocated across the cytoplasmic membrane), and thus conserves the redox energy in a proton gradient. The polypeptide is NADH-quinone oxidoreductase subunit C/D (Psychrobacter arcticus (strain DSM 17307 / VKM B-2377 / 273-4)).